A 184-amino-acid chain; its full sequence is NADH-quinone oxidoreductase subunit B 1 (184 aa).

[4Fe-4S] cluster is bound by residues Cys-37, Cys-38, Cys-103, and Cys-132.

Belongs to the complex I 20 kDa subunit family. As to quaternary structure, NDH-1 is composed of 14 different subunits. Subunits NuoB, C, D, E, F, and G constitute the peripheral sector of the complex. It depends on [4Fe-4S] cluster as a cofactor.

It is found in the cell membrane. The enzyme catalyses a quinone + NADH + 5 H(+)(in) = a quinol + NAD(+) + 4 H(+)(out). Functionally, NDH-1 shuttles electrons from NADH, via FMN and iron-sulfur (Fe-S) centers, to quinones in the respiratory chain. The immediate electron acceptor for the enzyme in this species is believed to be a menaquinone. Couples the redox reaction to proton translocation (for every two electrons transferred, four hydrogen ions are translocated across the cytoplasmic membrane), and thus conserves the redox energy in a proton gradient. The polypeptide is NADH-quinone oxidoreductase subunit B 1 (Streptomyces griseus subsp. griseus (strain JCM 4626 / CBS 651.72 / NBRC 13350 / KCC S-0626 / ISP 5235)).